We begin with the raw amino-acid sequence, 264 residues long: Proteasome subunit beta type-5 (264 aa).

Residues 1–59 (MALASVLQRPMPVNQHGFFGLGGGADLLDLGPGSPGDGLSLAAPSWGVPEEPRIEMLHG) constitute a propeptide, removed in mature form. Catalysis depends on T60, which acts as the Nucleophile. A108 provides a ligand contact to bortezomib.

Belongs to the peptidase T1B family. As to quaternary structure, the 26S proteasome consists of a 20S proteasome core and two 19S regulatory subunits. The 20S proteasome core is a barrel-shaped complex made of 28 subunits that are arranged in four stacked rings. The two outer rings are each formed by seven alpha subunits, and the two inner rings are formed by seven beta subunits. The proteolytic activity is exerted by three beta-subunits PSMB5, PSMB6 and PSMB7. Directly interacts with POMP. Interacts with ABCB1 and TAP1. As to expression, expressed in uterus at the embryo implantation site.

It localises to the cytoplasm. The protein resides in the nucleus. It carries out the reaction Cleavage of peptide bonds with very broad specificity.. In terms of biological role, component of the 20S core proteasome complex involved in the proteolytic degradation of most intracellular proteins. This complex plays numerous essential roles within the cell by associating with different regulatory particles. Associated with two 19S regulatory particles, forms the 26S proteasome and thus participates in the ATP-dependent degradation of ubiquitinated proteins. The 26S proteasome plays a key role in the maintenance of protein homeostasis by removing misfolded or damaged proteins that could impair cellular functions, and by removing proteins whose functions are no longer required. Associated with the PA200 or PA28, the 20S proteasome mediates ubiquitin-independent protein degradation. This type of proteolysis is required in several pathways including spermatogenesis (20S-PA200 complex) or generation of a subset of MHC class I-presented antigenic peptides (20S-PA28 complex). Within the 20S core complex, PSMB5 displays a chymotrypsin-like activity. This Mus musculus (Mouse) protein is Proteasome subunit beta type-5 (Psmb5).